A 718-amino-acid chain; its full sequence is Probable GTP diphosphokinase RSH2, chloroplastic (718 aa).

A chloroplast-targeting transit peptide spans 1-68 (MSVPAIAVYT…LFSSPTAAPR (68 aa)). Residues 9-48 (YTSPPGAVYTSSSSSELEASSRGSAPCATAAPPSPASSHR) are disordered. Over residues 19-39 (SSSSSELEASSRGSAPCATAA) the composition is skewed to low complexity. In terms of domain architecture, HD spans 243–347 (YLQHCVETAV…IKLADRLHNM (105 aa)).

This sequence belongs to the RelA/SpoT family.

It localises to the plastid. The protein localises to the chloroplast. It carries out the reaction GTP + ATP = guanosine 3'-diphosphate 5'-triphosphate + AMP. Functionally, probable ppGpp (guanosine 3'-diphosphate 5'-diphosphate) synthetase that may be involved in a rapid plant ppGpp-mediated response to pathogens and other stresses. This Oryza sativa subsp. japonica (Rice) protein is Probable GTP diphosphokinase RSH2, chloroplastic (RSH2).